Reading from the N-terminus, the 37-residue chain is ATP synthase subunit O, mitochondrial (37 aa).

The protein belongs to the ATPase delta chain family. As to quaternary structure, F-type ATPases have 2 components, CF(1) - the catalytic core - and CF(0) - the membrane proton channel. CF(1) has five subunits: alpha(3), beta(3), gamma(1), delta(1), epsilon(1). CF(0) has three main subunits: a, b and c.

The protein resides in the mitochondrion. It localises to the mitochondrion inner membrane. Functionally, mitochondrial membrane ATP synthase (F(1)F(0) ATP synthase or Complex V) produces ATP from ADP in the presence of a proton gradient across the membrane which is generated by electron transport complexes of the respiratory chain. F-type ATPases consist of two structural domains, F(1) - containing the extramembraneous catalytic core and F(0) - containing the membrane proton channel, linked together by a central stalk and a peripheral stalk. During catalysis, ATP synthesis in the catalytic domain of F(1) is coupled via a rotary mechanism of the central stalk subunits to proton translocation. Part of the complex F(0) domain and the peripheric stalk, which acts as a stator to hold the catalytic alpha(3)beta(3) subcomplex and subunit a/ATP6 static relative to the rotary elements. In Solanum tuberosum (Potato), this protein is ATP synthase subunit O, mitochondrial.